A 720-amino-acid polypeptide reads, in one-letter code: 1-deoxy-D-xylulose-5-phosphate synthase 1, chloroplastic (720 aa).

The N-terminal 51 residues, M1 to S51, are a transit peptide targeting the chloroplast. Positions L35–S46 are enriched in basic residues. The interval L35–D74 is disordered. Basic and acidic residues predominate over residues T56–S65. Thiamine diphosphate-binding positions include H142 and G183–S185. D214 serves as a coordination point for Mg(2+). Residues G215 to A216, N243, Y364, and E446 each bind thiamine diphosphate. N243 lines the Mg(2+) pocket.

It belongs to the transketolase family. DXPS subfamily. Homodimer. Mg(2+) serves as cofactor. Requires thiamine diphosphate as cofactor.

It localises to the plastid. The protein localises to the chloroplast stroma. It catalyses the reaction D-glyceraldehyde 3-phosphate + pyruvate + H(+) = 1-deoxy-D-xylulose 5-phosphate + CO2. The protein operates within metabolic intermediate biosynthesis; 1-deoxy-D-xylulose 5-phosphate biosynthesis; 1-deoxy-D-xylulose 5-phosphate from D-glyceraldehyde 3-phosphate and pyruvate: step 1/1. In terms of biological role, catalyzes the acyloin condensation reaction between C atoms 2 and 3 of pyruvate and glyceraldehyde 3-phosphate to yield 1-deoxy-D-xylulose-5-phosphate (DXP). Is a limiting enzyme for plastidic isoprenoid biosynthesis and essential for chloroplast development. The protein is 1-deoxy-D-xylulose-5-phosphate synthase 1, chloroplastic (CLA1) of Oryza sativa subsp. japonica (Rice).